The primary structure comprises 316 residues: Small ribosomal subunit biogenesis GTPase RsgA (316 aa).

The tract at residues 1–20 is disordered; that stretch reads MSKLSHQQQRRIHNHRQNKL. The segment covering 8-18 has biased composition (basic residues); it reads QQRRIHNHRQN. The CP-type G domain occupies 92–251; the sequence is AGKLKPVASN…IIDTPGVRGF (160 aa). GTP-binding positions include 139–142 and 193–201; these read NKSD and GQSGVGKSS. Zn(2+) is bound by residues cysteine 275, cysteine 280, histidine 282, and cysteine 288.

The protein belongs to the TRAFAC class YlqF/YawG GTPase family. RsgA subfamily. Monomer. Associates with 30S ribosomal subunit, binds 16S rRNA. Zn(2+) is required as a cofactor.

It is found in the cytoplasm. In terms of biological role, one of several proteins that assist in the late maturation steps of the functional core of the 30S ribosomal subunit. Helps release RbfA from mature subunits. May play a role in the assembly of ribosomal proteins into the subunit. Circularly permuted GTPase that catalyzes slow GTP hydrolysis, GTPase activity is stimulated by the 30S ribosomal subunit. This is Small ribosomal subunit biogenesis GTPase RsgA from Dichelobacter nodosus (strain VCS1703A).